A 238-amino-acid polypeptide reads, in one-letter code: Lactate utilization protein A (238 aa).

It belongs to the LutA/YkgE family.

In terms of biological role, is involved in L-lactate degradation and allows cells to grow with lactate as the sole carbon source. The protein is Lactate utilization protein A of Bacillus licheniformis (strain ATCC 14580 / DSM 13 / JCM 2505 / CCUG 7422 / NBRC 12200 / NCIMB 9375 / NCTC 10341 / NRRL NRS-1264 / Gibson 46).